The sequence spans 115 residues: Large ribosomal subunit protein bL19 (115 aa).

The protein belongs to the bacterial ribosomal protein bL19 family.

Functionally, this protein is located at the 30S-50S ribosomal subunit interface and may play a role in the structure and function of the aminoacyl-tRNA binding site. This is Large ribosomal subunit protein bL19 from Aeromonas hydrophila subsp. hydrophila (strain ATCC 7966 / DSM 30187 / BCRC 13018 / CCUG 14551 / JCM 1027 / KCTC 2358 / NCIMB 9240 / NCTC 8049).